The primary structure comprises 390 residues: Chorismate synthase 2 (390 aa).

NADP(+) contacts are provided by R39 and R45. FMN contacts are provided by residues 132-134 (RSS), 253-254 (NA), G298, 313-317 (KPIPT), and R339.

The protein belongs to the chorismate synthase family. Homotetramer. The cofactor is FMNH2.

It carries out the reaction 5-O-(1-carboxyvinyl)-3-phosphoshikimate = chorismate + phosphate. It participates in metabolic intermediate biosynthesis; chorismate biosynthesis; chorismate from D-erythrose 4-phosphate and phosphoenolpyruvate: step 7/7. Functionally, catalyzes the anti-1,4-elimination of the C-3 phosphate and the C-6 proR hydrogen from 5-enolpyruvylshikimate-3-phosphate (EPSP) to yield chorismate, which is the branch point compound that serves as the starting substrate for the three terminal pathways of aromatic amino acid biosynthesis. This reaction introduces a second double bond into the aromatic ring system. The chain is Chorismate synthase 2 from Bacillus cereus (strain ATCC 10987 / NRS 248).